Consider the following 262-residue polypeptide: Small ribosomal subunit protein eS1z (262 aa).

A compositionally biased stretch (basic residues) spans methionine 1–lysine 18. The tract at residues methionine 1 to valine 21 is disordered.

It belongs to the eukaryotic ribosomal protein eS1 family. In terms of assembly, component of the small ribosomal subunit. Mature ribosomes consist of a small (40S) and a large (60S) subunit. The 40S subunit contains about 33 different proteins and 1 molecule of RNA (18S). The 60S subunit contains about 49 different proteins and 3 molecules of RNA (25S, 5.8S and 5S).

The protein localises to the cytoplasm. The sequence is that of Small ribosomal subunit protein eS1z from Arabidopsis thaliana (Mouse-ear cress).